The chain runs to 119 residues: Large ribosomal subunit protein bL20 (119 aa).

It belongs to the bacterial ribosomal protein bL20 family.

In terms of biological role, binds directly to 23S ribosomal RNA and is necessary for the in vitro assembly process of the 50S ribosomal subunit. It is not involved in the protein synthesizing functions of that subunit. The protein is Large ribosomal subunit protein bL20 of Legionella pneumophila (strain Paris).